We begin with the raw amino-acid sequence, 293 residues long: Caspase-6 (293 aa).

The disordered stretch occupies residues 1 to 20; sequence MSSEPPPRRARGPGEEQNMT. The propeptide occupies 1 to 23; sequence MSSEPPPRRARGPGEEQNMTEID. The tri-arginine exosite stretch occupies residues 42–44; it reads KRR. Ser79 bears the Phosphoserine mark. His121 is an active-site residue. A 130's region region spans residues 125–142; sequence NHIYAYDAKIEIQTLTGL. Cys163 is an active-site residue. A propeptide spanning residues 180-193 is cleaved from the precursor; the sequence is HRTDTPDANLTQVD. Ser257 carries the post-translational modification Phosphoserine. 2 S-palmitoyl cysteine lipidation sites follow: Cys264 and Cys277.

The protein belongs to the peptidase C14A family. As to quaternary structure, heterotetramer that consists of two anti-parallel arranged heterodimers, each one formed by a 18 kDa (p18) and a 11 kDa (p11) subunits. Interacts with BIRC6/bruce. Interacts with RIPK3. Heterotetramer that consists of two anti-parallel arranged heterodimers, each one formed by a 18 kDa (Caspase-6 subunit p18) and a 11 kDa (Caspase-6 subunit p11) subunit. Post-translationally, phosphorylated by NUAK1; phosphorylation inhibits self-activation. Phosphorylation at Ser-257 by AMP-activated protein kinase (PRKAA1 or PRKAA2) inhibits autocleavage, preventing caspase activation, thereby preventing hepatocyte apoptosis. Palmitoylation by ZDHHC17 blocks dimerization and subsequent activation, leading to inhibit the cysteine protease activity. In terms of processing, can be cleaved and activated by different caspases, depending on the context. Cleaved and activated by caspase-8 (CASP8) and subsequently by caspase-3 (CASP3). Can also undergo autoactivation by mediating autocleavage at Asp-179 and Asp-193, while it is not able to cleave its N-terminal disordered prodomain. Cleaved and activated by CASP1, possibly in the context of inflammation.

The protein resides in the cytoplasm. It localises to the nucleus. The catalysed reaction is Strict requirement for Asp at position P1 and has a preferred cleavage sequence of Val-Glu-His-Asp-|-.. Its activity is regulated as follows. During activation, the N-terminal disordered prodomain is removed by cleavage. Concomitantly, double cleavage gives rise to a large 18-kDa and a small 11-kDa subunit. The two large and two small subunits then assemble to form the active CASP6 complex. Can be cleaved and activated by different caspases, depending on the context. Cleaved and activated by caspase-8 (CASP8) and subsequently by caspase-3 (CASP3). Can also undergo autoactivation by mediating autocleavage at Asp-179 and Asp-193, while it is not able to cleave its N-terminal disordered prodomain. Intramolecular cleavage at Asp-193 is a prerequisite for CASP6 self-activation. Cleaved and activated by CASP1 in neurons, possibly in the context of inflammation. Phosphorylation at Ser-257 inhibits autocleavage, preventing caspase activation. Its function is as follows. Cysteine protease that plays essential roles in programmed cell death, axonal degeneration, development and innate immunity. Acts as a non-canonical executioner caspase during apoptosis: localizes in the nucleus and cleaves the nuclear structural protein NUMA1 and lamin A/LMNA thereby inducing nuclear shrinkage and fragmentation. Lamin-A/LMNA cleavage is required for chromatin condensation and nuclear disassembly during apoptotic execution. Acts as a regulator of liver damage by promoting hepatocyte apoptosis: in absence of phosphorylation by AMP-activated protein kinase (AMPK), catalyzes cleavage of BID, leading to cytochrome c release, thereby participating in nonalcoholic steatohepatitis. Cleaves PARK7/DJ-1 in cells undergoing apoptosis. Involved in intrinsic apoptosis by mediating cleavage of RIPK1. Furthermore, cleaves many transcription factors such as NF-kappa-B and cAMP response element-binding protein/CREBBP. Cleaves phospholipid scramblase proteins XKR4 and XKR9. In addition to apoptosis, involved in different forms of programmed cell death. Plays an essential role in defense against viruses by acting as a central mediator of the ZBP1-mediated pyroptosis, apoptosis, and necroptosis (PANoptosis), independently of its cysteine protease activity. PANoptosis is a unique inflammatory programmed cell death, which provides a molecular scaffold that allows the interactions and activation of machinery required for inflammasome/pyroptosis, apoptosis and necroptosis. Mechanistically, interacts with RIPK3 and enhances the interaction between RIPK3 and ZBP1, leading to ZBP1-mediated inflammasome activation and cell death. Plays an essential role in axon degeneration during axon pruning which is the remodeling of axons during neurogenesis but not apoptosis. Regulates B-cell programs both during early development and after antigen stimulation. The protein is Caspase-6 of Bos taurus (Bovine).